An 89-amino-acid chain; its full sequence is Translation initiation factor IF-1, chloroplastic (89 aa).

The region spanning 1-72 (MKKQDLIDME…TKGRIIYRLR (72 aa)) is the S1-like domain.

Belongs to the IF-1 family. Component of the 30S ribosomal translation pre-initiation complex which assembles on the 30S ribosome in the order IF-2 and IF-3, IF-1 and N-formylmethionyl-tRNA(fMet); mRNA recruitment can occur at any time during PIC assembly.

It localises to the plastid. The protein resides in the chloroplast. One of the essential components for the initiation of protein synthesis. Stabilizes the binding of IF-2 and IF-3 on the 30S subunit to which N-formylmethionyl-tRNA(fMet) subsequently binds. Helps modulate mRNA selection, yielding the 30S pre-initiation complex (PIC). Upon addition of the 50S ribosomal subunit IF-1, IF-2 and IF-3 are released leaving the mature 70S translation initiation complex. The sequence is that of Translation initiation factor IF-1, chloroplastic from Angiopteris evecta (Mule's foot fern).